A 147-amino-acid polypeptide reads, in one-letter code: ATP synthase subunit 9, mitochondrial (147 aa).

The transit peptide at 1–66 (MASTRVLASR…TTRQAFQKRA (66 aa)) directs the protein to the mitochondrion. Transmembrane regions (helical) follow at residues 86 to 106 (SAAI…AALL) and 123 to 143 (AILG…VALM).

It belongs to the ATPase C chain family. In terms of assembly, F-type ATPases have 2 components, CF(1) - the catalytic core - and CF(0) - the membrane proton channel. CF(1) has five subunits: alpha(3), beta(3), gamma(1), delta(1), epsilon(1). CF(0) has three main subunits: a, b and c.

It is found in the mitochondrion membrane. In terms of biological role, mitochondrial membrane ATP synthase (F(1)F(0) ATP synthase or Complex V) produces ATP from ADP in the presence of a proton gradient across the membrane which is generated by electron transport complexes of the respiratory chain. F-type ATPases consist of two structural domains, F(1) - containing the extramembraneous catalytic core and F(0) - containing the membrane proton channel, linked together by a central stalk and a peripheral stalk. During catalysis, ATP synthesis in the catalytic domain of F(1) is coupled via a rotary mechanism of the central stalk subunits to proton translocation. Part of the complex F(0) domain. A homomeric c-ring of probably 10 subunits is part of the complex rotary element. The chain is ATP synthase subunit 9, mitochondrial (oli) from Neurospora crassa (strain ATCC 24698 / 74-OR23-1A / CBS 708.71 / DSM 1257 / FGSC 987).